The sequence spans 206 residues: Dephospho-CoA kinase (206 aa).

The region spanning 4–204 (IVGLTGGIGS…HQYLQLANAQ (201 aa)) is the DPCK domain. 12–17 (GSGKST) provides a ligand contact to ATP.

It belongs to the CoaE family.

It localises to the cytoplasm. It carries out the reaction 3'-dephospho-CoA + ATP = ADP + CoA + H(+). It participates in cofactor biosynthesis; coenzyme A biosynthesis; CoA from (R)-pantothenate: step 5/5. In terms of biological role, catalyzes the phosphorylation of the 3'-hydroxyl group of dephosphocoenzyme A to form coenzyme A. In Pasteurella multocida (strain Pm70), this protein is Dephospho-CoA kinase.